The sequence spans 530 residues: MFS transporter PfmaC (530 aa).

The tract at residues 41-76 (TTAVSDGDNQSSTMSGKTAAGDATSPASGSGSGGWF) is disordered. Polar residues predominate over residues 42-56 (TAVSDGDNQSSTMSG). Low complexity predominate over residues 59–69 (AAGDATSPASG). Transmembrane regions (helical) follow at residues 165 to 182 (YWLP…LGMY), 195 to 215 (FFIG…LGCW), 226 to 246 (ALFV…QAAL), 261 to 281 (WLFI…LFCF), 324 to 344 (IFTS…SLTV), 369 to 389 (NIPT…GFVS), 396 to 416 (GPVC…FTAW), 422 to 442 (LLMA…LLAG), 456 to 476 (AFIL…FQQL), and 493 to 513 (PSAL…IPLL).

The protein belongs to the major facilitator superfamily. Allantoate permease family.

The protein localises to the cell membrane. Functionally, MFS transporter; part of the gene cluster that mediates the biosynthesis of dihydroxynaphthalene (DHN)-melanin, a bluish-green pigment forming a dark layer in the conidial wall that protects the conidia from UV radiations. This Pestalotiopsis fici (strain W106-1 / CGMCC3.15140) protein is MFS transporter PfmaC.